A 112-amino-acid chain; its full sequence is Truncated ankyrin repeat protein B25 (112 aa).

Belongs to the orthopoxviruses B25 protein family.

The chain is Truncated ankyrin repeat protein B25 from Bos taurus (Bovine).